A 452-amino-acid polypeptide reads, in one-letter code: Phosphoglucosamine mutase (452 aa).

S103 serves as the catalytic Phosphoserine intermediate. S103, D244, D246, and D248 together coordinate Mg(2+). At S103 the chain carries Phosphoserine.

This sequence belongs to the phosphohexose mutase family. The cofactor is Mg(2+). In terms of processing, activated by phosphorylation.

The enzyme catalyses alpha-D-glucosamine 1-phosphate = D-glucosamine 6-phosphate. Its function is as follows. Catalyzes the conversion of glucosamine-6-phosphate to glucosamine-1-phosphate. In Fusobacterium nucleatum subsp. nucleatum (strain ATCC 25586 / DSM 15643 / BCRC 10681 / CIP 101130 / JCM 8532 / KCTC 2640 / LMG 13131 / VPI 4355), this protein is Phosphoglucosamine mutase.